Here is a 180-residue protein sequence, read N- to C-terminus: Oligoribonuclease (180 aa).

The region spanning 7–170 (LIWIDLEMTG…DDIRESIAEL (164 aa)) is the Exonuclease domain. Tyr-128 is an active-site residue.

Belongs to the oligoribonuclease family.

The protein localises to the cytoplasm. In terms of biological role, 3'-to-5' exoribonuclease specific for small oligoribonucleotides. The sequence is that of Oligoribonuclease from Pseudomonas paraeruginosa (strain DSM 24068 / PA7) (Pseudomonas aeruginosa (strain PA7)).